Reading from the N-terminus, the 207-residue chain is MARYLGPKAKLSRREGTDLFLKSARRSISDKAKFDSKPGQHGRTSGTRTSDYGLQLREKQKVKRMYGVLEKQFRRYFEEADRRRGNTGANLLSVLESRLDNVVYRMGFGSTRAEARQLVSHKAMTVNGQSVNIPSYMVKAGDVIAVRDKSKKQTRIAEALELAKQVGLPAWVDVNADKGEGTFKKVPDRDEFAADINESLIVELYSR.

The span at 29 to 38 (SDKAKFDSKP) shows a compositional bias: basic and acidic residues. The segment at 29-54 (SDKAKFDSKPGQHGRTSGTRTSDYGL) is disordered. Polar residues predominate over residues 42 to 52 (GRTSGTRTSDY). An S4 RNA-binding domain is found at 97 to 160 (SRLDNVVYRM…KKQTRIAEAL (64 aa)).

This sequence belongs to the universal ribosomal protein uS4 family. Part of the 30S ribosomal subunit. Contacts protein S5. The interaction surface between S4 and S5 is involved in control of translational fidelity.

In terms of biological role, one of the primary rRNA binding proteins, it binds directly to 16S rRNA where it nucleates assembly of the body of the 30S subunit. With S5 and S12 plays an important role in translational accuracy. The sequence is that of Small ribosomal subunit protein uS4 from Polaromonas naphthalenivorans (strain CJ2).